A 580-amino-acid polypeptide reads, in one-letter code: 2-isopropylmalate synthase (580 aa).

A compositionally biased stretch (polar residues) spans 1–11; the sequence is MSATAFPTLST. The segment at 1–37 is disordered; that stretch reads MSATAFPTLSTPAGEIPATAPAWNRQRRSQMPSHRYR. The region spanning 61–334 is the Pyruvate carboxyltransferase domain; it reads PLWVPVDLRD…DPMIDFSDID (274 aa). Mg(2+)-binding residues include aspartate 70, histidine 273, histidine 275, and asparagine 309. The interval 476–580 is regulatory domain; it reads EGEADAPQAD…ARAVAEVRPG (105 aa).

It belongs to the alpha-IPM synthase/homocitrate synthase family. LeuA type 2 subfamily. Homodimer. The cofactor is Mg(2+).

It localises to the cytoplasm. It catalyses the reaction 3-methyl-2-oxobutanoate + acetyl-CoA + H2O = (2S)-2-isopropylmalate + CoA + H(+). Its pathway is amino-acid biosynthesis; L-leucine biosynthesis; L-leucine from 3-methyl-2-oxobutanoate: step 1/4. Catalyzes the condensation of the acetyl group of acetyl-CoA with 3-methyl-2-oxobutanoate (2-ketoisovalerate) to form 3-carboxy-3-hydroxy-4-methylpentanoate (2-isopropylmalate). The chain is 2-isopropylmalate synthase from Nocardia farcinica (strain IFM 10152).